We begin with the raw amino-acid sequence, 259 residues long: Peptide methionine sulfoxide reductase (259 aa).

Residues 66–90 (TRTPADASMDQSSIAQGPDDDIPAP) are disordered.

Belongs to the MsrA Met sulfoxide reductase family.

It catalyses the reaction L-methionyl-[protein] + [thioredoxin]-disulfide + H2O = L-methionyl-(S)-S-oxide-[protein] + [thioredoxin]-dithiol. The enzyme catalyses [thioredoxin]-disulfide + L-methionine + H2O = L-methionine (S)-S-oxide + [thioredoxin]-dithiol. Functionally, has an important function as a repair enzyme for proteins that have been inactivated by oxidation. Catalyzes the reversible oxidation-reduction of methionine sulfoxide in proteins to methionine. This is Peptide methionine sulfoxide reductase from Lactuca sativa (Garden lettuce).